The following is a 398-amino-acid chain: Elongation factor Tu (398 aa).

Positions 10–208 (KPHVNVGTIG…ALDDYIPEPE (199 aa)) constitute a tr-type G domain. A G1 region spans residues 19–26 (GHVDHGKT). A GTP-binding site is contributed by 19 to 26 (GHVDHGKT). Threonine 26 serves as a coordination point for Mg(2+). The segment at 61–65 (GITIA) is G2. A G3 region spans residues 82–85 (DCPG). GTP contacts are provided by residues 82 to 86 (DCPGH) and 137 to 140 (NKAD). The segment at 137–140 (NKAD) is G4. A G5 region spans residues 175 to 177 (SAL).

Belongs to the TRAFAC class translation factor GTPase superfamily. Classic translation factor GTPase family. EF-Tu/EF-1A subfamily. Monomer.

It localises to the cytoplasm. It carries out the reaction GTP + H2O = GDP + phosphate + H(+). Its function is as follows. GTP hydrolase that promotes the GTP-dependent binding of aminoacyl-tRNA to the A-site of ribosomes during protein biosynthesis. This Marinobacter nauticus (strain ATCC 700491 / DSM 11845 / VT8) (Marinobacter aquaeolei) protein is Elongation factor Tu.